We begin with the raw amino-acid sequence, 804 residues long: Protein translocase subunit SecA (804 aa).

ATP-binding positions include Q87, 105–109 (GEGKT), and D500.

This sequence belongs to the SecA family. Monomer and homodimer. Part of the essential Sec protein translocation apparatus which comprises SecA, SecYEG and auxiliary proteins SecDF-YajC and YidC.

Its subcellular location is the cell inner membrane. It is found in the cytoplasm. The catalysed reaction is ATP + H2O + cellular proteinSide 1 = ADP + phosphate + cellular proteinSide 2.. In terms of biological role, part of the Sec protein translocase complex. Interacts with the SecYEG preprotein conducting channel. Has a central role in coupling the hydrolysis of ATP to the transfer of proteins into and across the cell membrane, serving both as a receptor for the preprotein-SecB complex and as an ATP-driven molecular motor driving the stepwise translocation of polypeptide chains across the membrane. In Neorickettsia sennetsu (strain ATCC VR-367 / Miyayama) (Ehrlichia sennetsu), this protein is Protein translocase subunit SecA.